A 381-amino-acid polypeptide reads, in one-letter code: MDINIDKYKNITRNLERDIVNLNPIQRGGILPTEAKKVIYEYWDGYSVCDYCSGRLDKIETPPINEFLDDMSKFLGMDITRPTHGARESKYAVMNAICKKGDYVVLDGNSHYTSYVALERANLNYVKTDVEEYPNFRVIPKSYAEKIDELEDSGKNIGLILLTHVDGSYGNVSDVSKVGKIAKSKGYPLLLNCAYSVGRMPVDGKKLNVDFIAASGHKSMAASGPCGLLSINAEYEDEILKTSKVNVVKELQMLGCTSRGIPILSLMASFPHIIERVKNWNLELEKTRKVVFEFEKLGFIALGEKPRNHDIIRFETPVLDKIAEKDKRRGFFFYEELKKRGIGGIRRGVTKEFKMSVYGLTGMQVDYIIDCIKSIVLENAN.

Pyridoxal 5'-phosphate is bound by residues 86–87 (AR), asparagine 192, and 215–217 (SGH). Lysine 218 carries the post-translational modification N6-(pyridoxal phosphate)lysine.

Belongs to the SepCysS family. Homodimer. Interacts with SepRS. It depends on pyridoxal 5'-phosphate as a cofactor.

The catalysed reaction is O-phospho-L-seryl-tRNA(Cys) + hydrogen sulfide + H(+) = L-cysteinyl-tRNA(Cys) + phosphate. Functionally, converts O-phospho-L-seryl-tRNA(Cys) (Sep-tRNA(Cys)) to L-cysteinyl-tRNA(Cys) (Cys-tRNA(Cys)). The sequence is that of O-phospho-L-seryl-tRNA:Cys-tRNA synthase from Methanococcus vannielii (strain ATCC 35089 / DSM 1224 / JCM 13029 / OCM 148 / SB).